The chain runs to 197 residues: dTTP/UTP pyrophosphatase (197 aa).

The active-site Proton acceptor is the Asp70.

Belongs to the Maf family. YhdE subfamily. A divalent metal cation is required as a cofactor.

It localises to the cytoplasm. It catalyses the reaction dTTP + H2O = dTMP + diphosphate + H(+). It carries out the reaction UTP + H2O = UMP + diphosphate + H(+). Nucleoside triphosphate pyrophosphatase that hydrolyzes dTTP and UTP. May have a dual role in cell division arrest and in preventing the incorporation of modified nucleotides into cellular nucleic acids. The polypeptide is dTTP/UTP pyrophosphatase (Yersinia pestis bv. Antiqua (strain Antiqua)).